Reading from the N-terminus, the 38-residue chain is Cytochrome b559 subunit beta (38 aa).

A helical membrane pass occupies residues 13 to 29 (WLAVHALAVPTVFFLGS). His-17 is a binding site for heme.

This sequence belongs to the PsbE/PsbF family. As to quaternary structure, heterodimer of an alpha subunit and a beta subunit. PSII is composed of 1 copy each of membrane proteins PsbA, PsbB, PsbC, PsbD, PsbE, PsbF, PsbH, PsbI, PsbJ, PsbK, PsbL, PsbM, PsbT, PsbX, PsbY, PsbZ, Psb30/Ycf12, at least 3 peripheral proteins of the oxygen-evolving complex and a large number of cofactors. It forms dimeric complexes. Heme b is required as a cofactor.

It localises to the plastid. The protein resides in the chloroplast thylakoid membrane. Functionally, this b-type cytochrome is tightly associated with the reaction center of photosystem II (PSII). PSII is a light-driven water:plastoquinone oxidoreductase that uses light energy to abstract electrons from H(2)O, generating O(2) and a proton gradient subsequently used for ATP formation. It consists of a core antenna complex that captures photons, and an electron transfer chain that converts photonic excitation into a charge separation. This chain is Cytochrome b559 subunit beta, found in Ostreococcus tauri.